The chain runs to 268 residues: F-actin-capping protein subunit alpha (268 aa).

An N-acetylserine modification is found at Ser2. At Ser17 the chain carries Phosphoserine.

It belongs to the F-actin-capping protein alpha subunit family. In terms of assembly, component of the F-actin capping complex, composed of a heterodimer of an alpha and a beta subunit. Interacts with BSP1 (via C-terminus); leading to recruitment of the F-actin capping complex to actin cortical patches and the acomyosin contractile ring.

Its subcellular location is the cytoplasm. The protein resides in the cytoskeleton. It localises to the actin patch. Functionally, F-actin-capping proteins bind in a Ca(2+)-independent manner to the fast growing ends of actin filaments (barbed end) thereby blocking the exchange of subunits at these ends. Unlike other capping proteins (such as gelsolin and severin), these proteins do not sever actin filaments. The protein is F-actin-capping protein subunit alpha (CAP1) of Saccharomyces cerevisiae (strain ATCC 204508 / S288c) (Baker's yeast).